The primary structure comprises 230 residues: Large ribosomal subunit protein uL1 (230 aa).

It belongs to the universal ribosomal protein uL1 family. As to quaternary structure, part of the 50S ribosomal subunit.

Functionally, binds directly to 23S rRNA. The L1 stalk is quite mobile in the ribosome, and is involved in E site tRNA release. In terms of biological role, protein L1 is also a translational repressor protein, it controls the translation of the L11 operon by binding to its mRNA. In Aster yellows witches'-broom phytoplasma (strain AYWB), this protein is Large ribosomal subunit protein uL1.